We begin with the raw amino-acid sequence, 254 residues long: Phosphoglycerate mutase 1 (254 aa).

Substrate-binding positions include 10-17 (RHGESAWN) and 23-24 (SG). The Tele-phosphohistidine intermediate role is filled by H11. Phosphoserine occurs at positions 14 and 23. The residue at position 26 (Y26) is a Phosphotyrosine. S31 is modified (phosphoserine). Substrate contacts are provided by residues R62, 89-92 (ERHY), and K100. The Proton donor/acceptor role is filled by E89. K106 is modified (N6-acetyllysine). 116–117 (RR) contacts substrate. S118 carries the phosphoserine modification. Residue 187–188 (GN) coordinates substrate. K251 carries the N6-acetyllysine; alternate modification. N6-succinyllysine; alternate is present on K251. N6-acetyllysine is present on residues K253 and K254.

This sequence belongs to the phosphoglycerate mutase family. BPG-dependent PGAM subfamily. In terms of assembly, homodimer. Post-translationally, acetylated at Lys-253, Lys-253 and Lys-254 under high glucose condition. Acetylation increases catalytic activity. Under glucose restriction SIRT1 levels dramatically increase and it deacetylates the enzyme.

The enzyme catalyses (2R)-2-phosphoglycerate = (2R)-3-phosphoglycerate. The catalysed reaction is (2R)-3-phospho-glyceroyl phosphate = (2R)-2,3-bisphosphoglycerate + H(+). Functionally, catalyzes the interconversion of 2-phosphoglycerate and 3-phosphoglyceratea crucial step in glycolysis, by using 2,3-bisphosphoglycerate. Also catalyzes the interconversion of (2R)-2,3-bisphosphoglycerate and (2R)-3-phospho-glyceroyl phosphate. The protein is Phosphoglycerate mutase 1 of Mus musculus (Mouse).